Here is a 547-residue protein sequence, read N- to C-terminus: Chaperonin GroEL (547 aa).

ATP is bound by residues 30–33 (TLGP), lysine 51, 87–91 (DGTTT), glycine 415, and aspartate 495.

It belongs to the chaperonin (HSP60) family. Forms a cylinder of 14 subunits composed of two heptameric rings stacked back-to-back. Interacts with the co-chaperonin GroES.

It localises to the cytoplasm. The enzyme catalyses ATP + H2O + a folded polypeptide = ADP + phosphate + an unfolded polypeptide.. Together with its co-chaperonin GroES, plays an essential role in assisting protein folding. The GroEL-GroES system forms a nano-cage that allows encapsulation of the non-native substrate proteins and provides a physical environment optimized to promote and accelerate protein folding. The polypeptide is Chaperonin GroEL (Thiobacillus denitrificans (strain ATCC 25259 / T1)).